The chain runs to 205 residues: Small ribosomal subunit protein uS5 (205 aa).

Residues 1 to 25 (MSGAQRGQRGGERRGGRDDRRGQGA) form a disordered region. Positions 9-24 (RGGERRGGRDDRRGQG) are enriched in basic and acidic residues. Positions 30-93 (YIERVVAINR…EEAKKHFFRV (64 aa)) constitute an S5 DRBM domain.

The protein belongs to the universal ribosomal protein uS5 family. In terms of assembly, part of the 30S ribosomal subunit. Contacts proteins S4 and S8.

Its function is as follows. With S4 and S12 plays an important role in translational accuracy. Functionally, located at the back of the 30S subunit body where it stabilizes the conformation of the head with respect to the body. The protein is Small ribosomal subunit protein uS5 of Nocardioides sp. (strain ATCC BAA-499 / JS614).